Consider the following 631-residue polypeptide: RING finger protein 112 (631 aa).

The RING-type zinc finger occupies 57–98 (CSICLERLRDPISLDCGHDFCIRCFSTHRLPGCEPPCCPECR). The interval 131–631 (PVRAEPLLLV…GDREPLLQEE (501 aa)) is interaction with ZBTB16. A GB1/RHD3-type G domain is found at 166-397 (DTPVCLLAVL…YVSDVLSAAP (232 aa)). 318-319 (RD) serves as a coordination point for GTP. A run of 2 helical transmembrane segments spans residues 547–567 (LAAV…GVVG) and 580–600 (GMVA…GGGV).

This sequence belongs to the TRAFAC class dynamin-like GTPase superfamily. GB1/RHD3 GTPase family. GB1 subfamily. Self-associates. Interacts with SP1 in an oxidative stress-regulated manner. Interacts with SIGMAR1 in an oxidative stress-regulated manner. Interacts with ZBTB16 (via C2H2-type zinc finger domains 1 and 2). In terms of processing, auto-ubiquitinated. As to expression, predominantly expressed in brain. Decreased expression in glioma brain tumors as compared to normal brains (at protein level).

Its subcellular location is the membrane. The protein localises to the cytoplasm. It localises to the nucleus. It is found in the nuclear body. The protein resides in the nucleoplasm. Its subcellular location is the endosome. The protein localises to the cytoplasmic vesicle. It localises to the secretory vesicle. It is found in the synaptic vesicle. The protein resides in the postsynaptic density. Its subcellular location is the perikaryon. The protein localises to the cell projection. It localises to the neuron projection. The enzyme catalyses S-ubiquitinyl-[E2 ubiquitin-conjugating enzyme]-L-cysteine + [acceptor protein]-L-lysine = [E2 ubiquitin-conjugating enzyme]-L-cysteine + N(6)-ubiquitinyl-[acceptor protein]-L-lysine.. The protein operates within protein modification; protein ubiquitination. E3 ubiquitin-protein ligase that plays an important role in neuronal differentiation, including neurogenesis and gliogenesis, during brain development. During embryonic development initiates neuronal differentiation by inducing cell cycle arrest at the G0/G1 phase through up-regulation of cell-cycle regulatory proteins. Plays a role not only in the fetal period during the development of the nervous system, but also in the adult brain, where it is involved in the maintenance of neural functions and protection of the nervous tissue cells from oxidative stress-induced damage. Exhibits GTPase and E3 ubiquitin-protein ligase activities. Regulates dendritic spine density and synaptic neurotransmission; its ability to hydrolyze GTP is involved in the maintenance of dendritic spine density. This chain is RING finger protein 112 (RNF112), found in Homo sapiens (Human).